The sequence spans 78 residues: Translational regulator CsrA (78 aa).

The protein belongs to the CsrA/RsmA family. In terms of assembly, homodimer; the beta-strands of each monomer intercalate to form a hydrophobic core, while the alpha-helices form wings that extend away from the core.

It localises to the cytoplasm. A translational regulator that binds mRNA to regulate translation initiation and/or mRNA stability. Usually binds in the 5'-UTR at or near the Shine-Dalgarno sequence preventing ribosome-binding, thus repressing translation. Its main target seems to be the major flagellin gene, while its function is anatagonized by FliW. The polypeptide is Translational regulator CsrA (Borrelia hermsii (strain HS1 / DAH)).